We begin with the raw amino-acid sequence, 98 residues long: NADH-ubiquinone oxidoreductase chain 4L (98 aa).

Helical transmembrane passes span 1-21, 29-49, and 61-81; these read MPVVYVNIFLAFIVSLMGLLV, SLLCLEGMMLSLFVMLTVTVL, and IILLVFAACEAALGLSLLVMV.

Belongs to the complex I subunit 4L family. In terms of assembly, core subunit of respiratory chain NADH dehydrogenase (Complex I) which is composed of 45 different subunits.

The protein resides in the mitochondrion inner membrane. It carries out the reaction a ubiquinone + NADH + 5 H(+)(in) = a ubiquinol + NAD(+) + 4 H(+)(out). Functionally, core subunit of the mitochondrial membrane respiratory chain NADH dehydrogenase (Complex I) which catalyzes electron transfer from NADH through the respiratory chain, using ubiquinone as an electron acceptor. Part of the enzyme membrane arm which is embedded in the lipid bilayer and involved in proton translocation. This Ursus arctos (Brown bear) protein is NADH-ubiquinone oxidoreductase chain 4L (MT-ND4L).